We begin with the raw amino-acid sequence, 155 residues long: Snaclec bothrojaracin subunit alpha (155 aa).

An N-terminal signal peptide occupies residues Met1–Ala23. 3 disulfides stabilise this stretch: Cys25–Cys36, Cys53–Cys150, and Cys125–Cys142. The region spanning His32–Lys151 is the C-type lectin domain.

This sequence belongs to the snaclec family. Heterodimer of subunits alpha and beta; disulfide-linked. In terms of tissue distribution, expressed by the venom gland.

The protein resides in the secreted. Its function is as follows. This potent antithrombotic agent acts in a calcium-independent manner. Exerts its anticoagulant effect by two distinct mechanisms. It binds to activated thrombin through exosite 1, blocking fibrinogen clotting, platelet activation, factor V activation and other effects, and it interacts with prothrombin (F2), decreasing its proteolytic activation -especially in the presence of factor Va. In vivo, intravenous injection before thrombosis induction causes a significant decrease in thrombus weight. Furthermore, BJC shows a prolonged effect by remaining in the plasma bound to prothrombin for at least 12 hours. The chain is Snaclec bothrojaracin subunit alpha from Bothrops jararaca (Jararaca).